We begin with the raw amino-acid sequence, 464 residues long: Opioid growth factor receptor-like protein 1 (464 aa).

2 disordered regions span residues 1–91 (MGNL…AKPK) and 309–464 (ENFI…TSSG). Over residues 43–59 (QQHDEPEQPKQPPERAG) the composition is skewed to basic and acidic residues. The segment covering 74 to 86 (AAGAEQGGESTEG) has biased composition (low complexity). Residues 316-325 (PKKELPERSK) are compositionally biased toward basic and acidic residues. A compositionally biased stretch (polar residues) spans 327-342 (QKTPTLPASGSNGQTS). Basic and acidic residues-rich tracts occupy residues 363–382 (SVEE…DKPS), 390–400 (PKPRNTEKDSA), and 425–439 (SEKD…KDSE). Positions 452-464 (AQQNATNPQTSSG) are enriched in polar residues.

Belongs to the opioid growth factor receptor family.

This Mus musculus (Mouse) protein is Opioid growth factor receptor-like protein 1 (Ogfrl1).